A 311-amino-acid chain; its full sequence is Homeobox-leucine zipper protein HOX13 (311 aa).

The tract at residues 1-74 is disordered; that stretch reads MKRPTSSSRK…PSCGLGEKKR (74 aa). Acidic residues predominate over residues 35-54; that stretch reads DEAEMEEVDEEEEEEVDEDM. A DNA-binding region (homeobox) is located at residues 69 to 128; sequence LGEKKRRLALEQVRALERSFDTDNKLDPDRKARIARDLGLQPRQVAVWFQNRRARWKTKQ. Residues 127–171 are leucine-zipper; the sequence is KQLERDFAALRARHDALRADCDALRRDKDALAAEIRELREKLPTK.

The protein belongs to the HD-ZIP homeobox family. Class I subfamily. In terms of tissue distribution, expressed in seedlings, roots, stems, leaf sheaths and blades and panicles.

The protein localises to the nucleus. Functionally, probable transcription factor. This chain is Homeobox-leucine zipper protein HOX13 (HOX13), found in Oryza sativa subsp. japonica (Rice).